The sequence spans 310 residues: tRNA dimethylallyltransferase (310 aa).

Residue 9-16 coordinates ATP; that stretch reads GPTAVGKT. A substrate-binding site is contributed by 11–16; the sequence is TAVGKT. Residues 34–37 are interaction with substrate tRNA; that stretch reads DSMQ.

It belongs to the IPP transferase family. Monomer. Mg(2+) is required as a cofactor.

It carries out the reaction adenosine(37) in tRNA + dimethylallyl diphosphate = N(6)-dimethylallyladenosine(37) in tRNA + diphosphate. Its function is as follows. Catalyzes the transfer of a dimethylallyl group onto the adenine at position 37 in tRNAs that read codons beginning with uridine, leading to the formation of N6-(dimethylallyl)adenosine (i(6)A). The sequence is that of tRNA dimethylallyltransferase from Pediococcus pentosaceus (strain ATCC 25745 / CCUG 21536 / LMG 10740 / 183-1w).